A 252-amino-acid chain; its full sequence is Phosphate import ATP-binding protein PstB (252 aa).

One can recognise an ABC transporter domain in the interval 6 to 247 (MSIRDLNFYY…PAQKATEDYI (242 aa)). 38 to 45 (GPSGCGKS) provides a ligand contact to ATP.

It belongs to the ABC transporter superfamily. Phosphate importer (TC 3.A.1.7) family. As to quaternary structure, the complex is composed of two ATP-binding proteins (PstB), two transmembrane proteins (PstC and PstA) and a solute-binding protein (PstS).

It is found in the cell inner membrane. The catalysed reaction is phosphate(out) + ATP + H2O = ADP + 2 phosphate(in) + H(+). In terms of biological role, part of the ABC transporter complex PstSACB involved in phosphate import. Responsible for energy coupling to the transport system. In Psychrobacter cryohalolentis (strain ATCC BAA-1226 / DSM 17306 / VKM B-2378 / K5), this protein is Phosphate import ATP-binding protein PstB.